A 210-amino-acid polypeptide reads, in one-letter code: Menaquinone reductase, multiheme cytochrome c subunit (210 aa).

The helical transmembrane segment at 20 to 40 (GGAAPFFVGLVVALVFGWWAF) threads the bilayer. Cysteine 67, cysteine 70, histidine 71, cysteine 88, cysteine 91, histidine 92, cysteine 140, cysteine 143, histidine 144, cysteine 152, cysteine 155, histidine 156, cysteine 186, cysteine 189, histidine 190, cysteine 205, cysteine 208, and histidine 209 together coordinate heme.

Belongs to the multiheme cytochrome c family. In terms of assembly, the Qrc complex is composed of four subunits: QrcA, QrcB, QrcC and QrcD. Can form a supercomplex with the [NiFe] hydrogenase HynA1 and the tetraheme Type I cytochrome c3 TpIc(3), its physiological electron donors. Heme c is required as a cofactor.

The protein localises to the cell inner membrane. In terms of biological role, component of the respiratory Qrc complex, that catalyzes the reduction of the menaquinone pool using electrons transferred from the reduced periplasmic cytochrome c3, and which is probably involved in sulfate respiration. Is likely essential for growth on H(2) or formate since the periplasmic hydrogenases and/or formate dehydrogenases act as primary electron donors for the Qrc complex. The protein is Menaquinone reductase, multiheme cytochrome c subunit of Nitratidesulfovibrio vulgaris (strain ATCC 29579 / DSM 644 / CCUG 34227 / NCIMB 8303 / VKM B-1760 / Hildenborough) (Desulfovibrio vulgaris).